A 428-amino-acid chain; its full sequence is Serine--tRNA ligase (428 aa).

An L-serine-binding site is contributed by T231–E233. Residues R262–E264 and V278 contribute to the ATP site. E285 is a binding site for L-serine. An ATP-binding site is contributed by E349 to S352. Residue T384 coordinates L-serine.

The protein belongs to the class-II aminoacyl-tRNA synthetase family. Type-1 seryl-tRNA synthetase subfamily. Homodimer. The tRNA molecule binds across the dimer.

The protein resides in the cytoplasm. It catalyses the reaction tRNA(Ser) + L-serine + ATP = L-seryl-tRNA(Ser) + AMP + diphosphate + H(+). The catalysed reaction is tRNA(Sec) + L-serine + ATP = L-seryl-tRNA(Sec) + AMP + diphosphate + H(+). It functions in the pathway aminoacyl-tRNA biosynthesis; selenocysteinyl-tRNA(Sec) biosynthesis; L-seryl-tRNA(Sec) from L-serine and tRNA(Sec): step 1/1. In terms of biological role, catalyzes the attachment of serine to tRNA(Ser). Is also able to aminoacylate tRNA(Sec) with serine, to form the misacylated tRNA L-seryl-tRNA(Sec), which will be further converted into selenocysteinyl-tRNA(Sec). The protein is Serine--tRNA ligase of Bifidobacterium adolescentis (strain ATCC 15703 / DSM 20083 / NCTC 11814 / E194a).